Here is a 247-residue protein sequence, read N- to C-terminus: Spermatogenesis-associated protein 46 (247 aa).

A disordered region spans residues 125-164 (QRDSCLPEDTADSVCSSSPSPENTCPREATKKSRPGPDTT). A compositionally biased stretch (polar residues) spans 137–147 (SVCSSSPSPEN).

It localises to the nucleus membrane. Functionally, plays a role in spermiogenesis and fertilization. The polypeptide is Spermatogenesis-associated protein 46 (SPATA46) (Bos taurus (Bovine)).